The sequence spans 312 residues: UDP-N-acetylenolpyruvoylglucosamine reductase (312 aa).

The FAD-binding PCMH-type domain maps to 33 to 199; it reads RVGGKAEWYC…TGATLQLLPG (167 aa). The active site involves Arg-178. The active-site Proton donor is the Ser-229. Residue Glu-299 is part of the active site.

This sequence belongs to the MurB family. FAD serves as cofactor.

The protein resides in the cytoplasm. The catalysed reaction is UDP-N-acetyl-alpha-D-muramate + NADP(+) = UDP-N-acetyl-3-O-(1-carboxyvinyl)-alpha-D-glucosamine + NADPH + H(+). It functions in the pathway cell wall biogenesis; peptidoglycan biosynthesis. Functionally, cell wall formation. This chain is UDP-N-acetylenolpyruvoylglucosamine reductase, found in Synechococcus sp. (strain JA-3-3Ab) (Cyanobacteria bacterium Yellowstone A-Prime).